Consider the following 275-residue polypeptide: Rhamnulose-1-phosphate aldolase (275 aa).

Glutamate 117 is a catalytic residue. The Zn(2+) site is built by histidine 141, histidine 143, and histidine 212.

Belongs to the aldolase class II family. RhaD subfamily. As to quaternary structure, homotetramer. Requires Zn(2+) as cofactor.

The protein resides in the cytoplasm. The enzyme catalyses L-rhamnulose 1-phosphate = (S)-lactaldehyde + dihydroxyacetone phosphate. The protein operates within carbohydrate degradation; L-rhamnose degradation; glycerone phosphate from L-rhamnose: step 3/3. Catalyzes the reversible cleavage of L-rhamnulose-1-phosphate to dihydroxyacetone phosphate (DHAP) and L-lactaldehyde. The protein is Rhamnulose-1-phosphate aldolase of Salmonella dublin (strain CT_02021853).